A 91-amino-acid chain; its full sequence is Large ribosomal subunit protein bL31B-1 (91 aa).

Belongs to the bacterial ribosomal protein bL31 family. Type B subfamily. Part of the 50S ribosomal subunit.

The chain is Large ribosomal subunit protein bL31B-1 from Streptomyces avermitilis (strain ATCC 31267 / DSM 46492 / JCM 5070 / NBRC 14893 / NCIMB 12804 / NRRL 8165 / MA-4680).